The chain runs to 219 residues: Small ribosomal subunit protein uS3c (219 aa).

The KH type-2 domain occupies I47 to L118.

This sequence belongs to the universal ribosomal protein uS3 family. Part of the 30S ribosomal subunit.

It is found in the plastid. The protein localises to the chloroplast. This chain is Small ribosomal subunit protein uS3c (rps3), found in Chara vulgaris (Common stonewort).